Here is a 444-residue protein sequence, read N- to C-terminus: MSSRKEWALIVSLLLGAILVPINSTMIAVALSSISHTYNESIASITWVVTVYLIVMAVTQPIAGKLGDMYGNKTMYLWGVGLFLIASLGCALSPSLLLLIVFRALQAVGGALLTPNSIAIIRHVVSEKRLPKVFGFFGLGAGLGAALGPFIGSILIDSFSWHSIFWVNIPFLAIALFTALTMFPQYKENKSDAPLDIIGSLLLAGSIVSIILLTKNEAPWGYTVYSVLILLFVPLFFRREKRTQHPIIDFALFKSSTFTNANLSVLLSNLMMYAVLLIMPLFMTNQFGLNTSNSGMALSVFSIFMSASNWVGAQLHHKWGAKKIIFLSFAMMAGANLLFLLLSSSHSVLFLMLSLILGGLASGVGLTSMQVSSLATVDPGMSGVASGIFSTFRYFGSIISSALIGLISGYHTLFMILFAVSIIGVFVSLGIKSDETARIEKNSA.

A run of 14 helical transmembrane segments spans residues 9 to 29 (LIVS…MIAV), 42 to 62 (IASI…TQPI), 82 to 102 (LFLI…LIVF), 104 to 126 (ALQA…HVVS), 136 to 156 (FFGL…SILI), 164 to 184 (IFWV…TMFP), 193 to 213 (APLD…IILL), 217 to 237 (EAPW…PLFF), 263 to 283 (LSVL…PLFM), 295 to 315 (GMAL…GAQL), 324 to 344 (IIFL…LLSS), 347 to 367 (SVLF…VGLT), 387 to 407 (GIFS…IGLI), and 411 to 431 (HTLF…SLGI).

The protein belongs to the major facilitator superfamily. TCR/Tet family.

The protein resides in the cell membrane. This is an uncharacterized protein from Bacillus subtilis (strain 168).